Reading from the N-terminus, the 64-residue chain is uncharacterized protein (64 aa).

The signal sequence occupies residues 1-26 (MVVKENFCGACLTIPLAFAGAGTAIG). A helical transmembrane segment spans residues 33 to 53 (IKKWSIVITIISLLLTVWFIY).

It belongs to the IIV-6 010R family.

The protein localises to the host membrane. This is an uncharacterized protein from Aedes vexans (Inland floodwater mosquito).